Consider the following 274-residue polypeptide: NH(3)-dependent NAD(+) synthetase (274 aa).

46–53 serves as a coordination point for ATP; it reads GISGGQDS. D52 serves as a coordination point for Mg(2+). R140 contacts deamido-NAD(+). Residue T160 coordinates ATP. E165 lines the Mg(2+) pocket. 2 residues coordinate deamido-NAD(+): K173 and D180. The ATP site is built by K189 and T211. 260–261 is a deamido-NAD(+) binding site; the sequence is HK.

This sequence belongs to the NAD synthetase family. In terms of assembly, homodimer.

It catalyses the reaction deamido-NAD(+) + NH4(+) + ATP = AMP + diphosphate + NAD(+) + H(+). It functions in the pathway cofactor biosynthesis; NAD(+) biosynthesis; NAD(+) from deamido-NAD(+) (ammonia route): step 1/1. Functionally, catalyzes the ATP-dependent amidation of deamido-NAD to form NAD. Uses ammonia as a nitrogen source. This is NH(3)-dependent NAD(+) synthetase from Streptococcus pyogenes serotype M18 (strain MGAS8232).